The primary structure comprises 49 residues: Large ribosomal subunit protein bL32 (49 aa).

This sequence belongs to the bacterial ribosomal protein bL32 family.

The chain is Large ribosomal subunit protein bL32 from Nitratiruptor sp. (strain SB155-2).